A 116-amino-acid polypeptide reads, in one-letter code: Aspartate 1-decarboxylase (116 aa).

The active-site Schiff-base intermediate with substrate; via pyruvic acid is S25. A Pyruvic acid (Ser) modification is found at S25. A substrate-binding site is contributed by T57. Y58 functions as the Proton donor in the catalytic mechanism. Position 72–74 (72–74) interacts with substrate; that stretch reads GAA.

It belongs to the PanD family. In terms of assembly, heterooctamer of four alpha and four beta subunits. Requires pyruvate as cofactor. Is synthesized initially as an inactive proenzyme, which is activated by self-cleavage at a specific serine bond to produce a beta-subunit with a hydroxyl group at its C-terminus and an alpha-subunit with a pyruvoyl group at its N-terminus.

The protein resides in the cytoplasm. The enzyme catalyses L-aspartate + H(+) = beta-alanine + CO2. It participates in cofactor biosynthesis; (R)-pantothenate biosynthesis; beta-alanine from L-aspartate: step 1/1. Functionally, catalyzes the pyruvoyl-dependent decarboxylation of aspartate to produce beta-alanine. The sequence is that of Aspartate 1-decarboxylase from Helicobacter acinonychis (strain Sheeba).